The sequence spans 496 residues: Glutamyl-tRNA(Gln) amidotransferase subunit A (496 aa).

Catalysis depends on charge relay system residues K79 and S159. Catalysis depends on S183, which acts as the Acyl-ester intermediate.

It belongs to the amidase family. GatA subfamily. As to quaternary structure, heterotrimer of A, B and C subunits.

It carries out the reaction L-glutamyl-tRNA(Gln) + L-glutamine + ATP + H2O = L-glutaminyl-tRNA(Gln) + L-glutamate + ADP + phosphate + H(+). Functionally, allows the formation of correctly charged Gln-tRNA(Gln) through the transamidation of misacylated Glu-tRNA(Gln) in organisms which lack glutaminyl-tRNA synthetase. The reaction takes place in the presence of glutamine and ATP through an activated gamma-phospho-Glu-tRNA(Gln). This chain is Glutamyl-tRNA(Gln) amidotransferase subunit A, found in Ruegeria pomeroyi (strain ATCC 700808 / DSM 15171 / DSS-3) (Silicibacter pomeroyi).